Consider the following 456-residue polypeptide: Phosphomannomutase (456 aa).

The active-site Phosphoserine intermediate is Ser98. Positions 98, 246, 248, and 250 each coordinate Mg(2+).

The protein belongs to the phosphohexose mutase family. Requires Mg(2+) as cofactor.

It catalyses the reaction alpha-D-mannose 1-phosphate = D-mannose 6-phosphate. The protein operates within nucleotide-sugar biosynthesis; GDP-alpha-D-mannose biosynthesis; alpha-D-mannose 1-phosphate from D-fructose 6-phosphate: step 2/2. Its pathway is bacterial outer membrane biogenesis; LPS O-antigen biosynthesis. Its function is as follows. Involved in GDP-mannose biosynthesis which serves as the activated sugar nucleotide precursor for mannose residues in cell surface polysaccharides. This enzyme participates in synthesis of the LPS O9 antigen. In Escherichia coli, this protein is Phosphomannomutase (manB).